The chain runs to 308 residues: GTP cyclohydrolase FolE2 (308 aa).

Belongs to the GTP cyclohydrolase IV family.

It catalyses the reaction GTP + H2O = 7,8-dihydroneopterin 3'-triphosphate + formate + H(+). It functions in the pathway cofactor biosynthesis; 7,8-dihydroneopterin triphosphate biosynthesis; 7,8-dihydroneopterin triphosphate from GTP: step 1/1. In terms of biological role, converts GTP to 7,8-dihydroneopterin triphosphate. The sequence is that of GTP cyclohydrolase FolE2 from Idiomarina loihiensis (strain ATCC BAA-735 / DSM 15497 / L2-TR).